Reading from the N-terminus, the 324-residue chain is Rho crystallin (324 aa).

N-acetylthreonine is present on T2. NADP(+) is bound at residue 218–281; it reads SVLGSHRDRN…SFTPARIKQN (64 aa).

The protein belongs to the aldo/keto reductase family. As to quaternary structure, monomer.

This is Rho crystallin from Aquarana catesbeiana (American bullfrog).